Consider the following 242-residue polypeptide: UPF0309 protein BH3325 (242 aa).

The SIS domain maps to 34 to 217; that stretch reads VSEAVMNGGR…HLLVQQGFEP (184 aa).

It belongs to the UPF0309 family.

This chain is UPF0309 protein BH3325, found in Halalkalibacterium halodurans (strain ATCC BAA-125 / DSM 18197 / FERM 7344 / JCM 9153 / C-125) (Bacillus halodurans).